A 510-amino-acid chain; its full sequence is NAD(P)H-quinone oxidoreductase subunit 2 B, chloroplastic (510 aa).

Helical transmembrane passes span 24-44 (LLLF…GLIL), 57-77 (IPWL…ALLF), 99-119 (IFQF…VEYI), 124-144 (MAIT…MFLC), 150-170 (ITIF…SGYT), 183-203 (YLLM…WLYG), 229-249 (ISIA…PAPF), 295-315 (WHLL…LVAI), 323-343 (MLAY…IVGD), 347-367 (GYAS…GTFA), 395-415 (ALSS…AGFF), 418-438 (LHLF…IGLL), and 484-504 (MIVC…IIAI).

The protein belongs to the complex I subunit 2 family. As to quaternary structure, NDH is composed of at least 16 different subunits, 5 of which are encoded in the nucleus.

The protein localises to the plastid. It is found in the chloroplast thylakoid membrane. It catalyses the reaction a plastoquinone + NADH + (n+1) H(+)(in) = a plastoquinol + NAD(+) + n H(+)(out). The enzyme catalyses a plastoquinone + NADPH + (n+1) H(+)(in) = a plastoquinol + NADP(+) + n H(+)(out). Its function is as follows. NDH shuttles electrons from NAD(P)H:plastoquinone, via FMN and iron-sulfur (Fe-S) centers, to quinones in the photosynthetic chain and possibly in a chloroplast respiratory chain. The immediate electron acceptor for the enzyme in this species is believed to be plastoquinone. Couples the redox reaction to proton translocation, and thus conserves the redox energy in a proton gradient. This Ceratophyllum demersum (Rigid hornwort) protein is NAD(P)H-quinone oxidoreductase subunit 2 B, chloroplastic.